The chain runs to 89 residues: MALTNADRAEIIAKFARAENDTGSPEVQVALLTAQINDLQGHFKAHKHDHHSRRGLIRMVNQRRKLLDYLNGKDHERYTALIGALGLRR.

It belongs to the universal ribosomal protein uS15 family. In terms of assembly, part of the 30S ribosomal subunit. Forms a bridge to the 50S subunit in the 70S ribosome, contacting the 23S rRNA.

One of the primary rRNA binding proteins, it binds directly to 16S rRNA where it helps nucleate assembly of the platform of the 30S subunit by binding and bridging several RNA helices of the 16S rRNA. In terms of biological role, forms an intersubunit bridge (bridge B4) with the 23S rRNA of the 50S subunit in the ribosome. The chain is Small ribosomal subunit protein uS15 from Acinetobacter baumannii (strain AB307-0294).